Here is a 287-residue protein sequence, read N- to C-terminus: Complement C1q-like protein 2 (287 aa).

Residues 1 to 21 form the signal peptide; sequence MALGLLIAVPLLLQAAPPGAA. A disordered region spans residues 65–144; sequence LSANPPPPFI…GTGGGGDTEG (80 aa). A Collagen-like domain is found at 76–118; that stretch reads GPKGDPGRPGKPGPRGPPGEPGPPGPRGPPGEKGDSGRPGLPG. A compositionally biased stretch (pro residues) spans 84-104; sequence PGKPGPRGPPGEPGPPGPRGP. Residues 127–141 show a composition bias toward gly residues; the sequence is GGVGVVSGGTGGGGD. The C1q domain occupies 154-287; it reads FSGPKIAFYV…TFSGFLLYPD (134 aa).

Forms homotrimers which can further assemble to form higher-order oligomeric complexes. Interacts with ADGRB3. May interact with ERFE. Forms heterooligomers with C1QL3 and C1QL4, when proteins are coexpressed; this interaction does not occur after secretion. Post-translationally, glycosylated, but not with N-linked glycans. Highest expression in eye, followed by placenta and brain, intermediate expression in adipose tissue and lowest expression in lymph node and testis.

It localises to the secreted. May regulate the number of excitatory synapses that are formed on hippocampus neurons. Has no effect on inhibitory synapses. The polypeptide is Complement C1q-like protein 2 (C1ql2) (Mus musculus (Mouse)).